Here is a 1057-residue protein sequence, read N- to C-terminus: Desmoglein-1-alpha (1057 aa).

An N-terminal signal peptide occupies residues 1–23 (MDWHSFRIAALLLTSLVVLEVNS). Positions 24 to 49 (EFQIQVRDHNAKNGTIKWHSIRRQKR) are excised as a propeptide. Cadherin domains are found at residues 50 to 157 (EWIK…PPVF), 158 to 269 (SMTT…IPYL), 270 to 389 (EQSS…RPGS), and 386 to 493 (RPGS…TGSE). Residues 50-564 (EWIKFAAACR…LYGDNVHFGP (515 aa)) are Extracellular-facing. Residues asparagine 110 and asparagine 180 are each glycosylated (N-linked (GlcNAc...) asparagine). The segment at 490–552 (TGSESGGSSS…FQGDPDETLE (63 aa)) is disordered. Residues 510–525 (NGYQGTSSTENPQRVT) show a composition bias toward polar residues. A helical membrane pass occupies residues 565–585 (AGIGLLIMGFLVLGLVPFLLI). Residues 586-1057 (CCDCGGAPGG…TKYNTVQYSK (472 aa)) lie on the Cytoplasmic side of the membrane. Desmoglein repeat repeat units lie at residues 832–858 (AYHSGPGVQHPVPIPDPLGYGNVTVRE), 859–888 (SYTTSGTLKPSVHFHDNQQASNVVVTERVV), 889–918 (GPISGADLHGMLEIPDLRGGANVIVTERVI), 919–946 (APGSSLPTSLTIPNPQETSNVVVTERVI), and 947–975 (QPTSGMIGNLSMTPELSSAHNVIVTERVV).

Binds to JUP/plakoglobin. Interacts with PKP2. Interacts with DSC3; there is evidence to suggest that the interaction promotes cell-cell adhesion of keratinocytes. In terms of tissue distribution, expressed in testis.

It is found in the cell membrane. The protein resides in the cell junction. The protein localises to the desmosome. Its subcellular location is the cytoplasm. It localises to the nucleus. Functionally, component of intercellular desmosome junctions. Involved in the interaction of plaque proteins and intermediate filaments mediating cell-cell adhesion. This chain is Desmoglein-1-alpha (Dsg1a), found in Mus musculus (Mouse).